The sequence spans 103 residues: Small ribosomal subunit protein uS10 (103 aa).

This sequence belongs to the universal ribosomal protein uS10 family. As to quaternary structure, part of the 30S ribosomal subunit.

Its function is as follows. Involved in the binding of tRNA to the ribosomes. This is Small ribosomal subunit protein uS10 from Shewanella amazonensis (strain ATCC BAA-1098 / SB2B).